The chain runs to 419 residues: Indole prenyltransferase tdiB (419 aa).

Residue Pro-58–Ser-59 coordinates L-tryptophan. Arg-81, Lys-165, Tyr-167, Arg-236, Lys-238, Tyr-240, Tyr-330, and Tyr-394 together coordinate substrate.

Belongs to the tryptophan dimethylallyltransferase family.

It catalyses the reaction didemethylasterriquinone D + dimethylallyl diphosphate = asterriquinone C1 + diphosphate. The protein operates within secondary metabolite biosynthesis. Indole prenyltransferase; part of the gene cluster that mediates the biosynthesis of terrequinone A, an antitumor agent. The first step in the biosynthetic pathway for terrequinone A is formation of indole pyruvic acid (IPA) from L-tryptophan by the aminotransferase tdiD. The nonribosomal peptide synthase tdiA then immediately converts unstable IPA to didemethylasterriquinone D (DDAQ D), via condensation of 2 IPA molecules. The symmetric connectivity of the 2 IPA molecules is thought to arise by head-to-tail dual Claisen condensations facilitated by the TE domain. TdiB then catalyzes reverse prenylation by transferring dimethylallyl diphosphate to carbon atom 2' of DDAQ D, to yield asterriquinone C-1. Finally, tdiC and tdiE enzymes robustly convert asterriquinone C-1 to terrequinone A via a transformation involving regular prenylation at carbon atom 5, which requires elimination of the hydroxy group on C-5. This is Indole prenyltransferase tdiB from Emericella nidulans (strain FGSC A4 / ATCC 38163 / CBS 112.46 / NRRL 194 / M139) (Aspergillus nidulans).